The primary structure comprises 126 residues: SPbeta prophage-derived uncharacterized protein YorC (126 aa).

The polypeptide is SPbeta prophage-derived uncharacterized protein YorC (yorC) (Bacillus subtilis (strain 168)).